Consider the following 173-residue polypeptide: Large ribosomal subunit protein uL10 (173 aa).

The protein belongs to the universal ribosomal protein uL10 family. Part of the ribosomal stalk of the 50S ribosomal subunit. The N-terminus interacts with L11 and the large rRNA to form the base of the stalk. The C-terminus forms an elongated spine to which L12 dimers bind in a sequential fashion forming a multimeric L10(L12)X complex.

Functionally, forms part of the ribosomal stalk, playing a central role in the interaction of the ribosome with GTP-bound translation factors. The polypeptide is Large ribosomal subunit protein uL10 (Bifidobacterium adolescentis (strain ATCC 15703 / DSM 20083 / NCTC 11814 / E194a)).